The primary structure comprises 113 residues: Tubulin-folding cofactor A (113 aa).

The interval 83-113 (LEETDEKEGPEIEDAKKTVADVEKQFPTEDA) is disordered. The span at 89–113 (KEGPEIEDAKKTVADVEKQFPTEDA) shows a compositional bias: basic and acidic residues.

It belongs to the TBCA family. In terms of assembly, monomer. Supercomplex made of cofactors A to E. Cofactors A and D function by capturing and stabilizing tubulin in a quasi-native conformation. Cofactor E binds to the cofactor D-tubulin complex; interaction with cofactor C then causes the release of tubulin polypeptides that are committed to the native state. Interacts with TUBB9. As to expression, expressed in leaves, roots, flowers and stems.

Its function is as follows. Tubulin-folding protein involved in the control of the alpha-/beta-tubulin monomer balance. Functions as a reservoir of bound and non-toxic beta-tubulin. Required in the developing embryo. The protein is Tubulin-folding cofactor A (TFCA) of Arabidopsis thaliana (Mouse-ear cress).